Here is a 328-residue protein sequence, read N- to C-terminus: Dof zinc finger protein PBF (328 aa).

The interval 33 to 56 is disordered; that stretch reads RDPKQTRAMPQIGGSGERKPRPQL. The segment at 60-114 adopts a Dof-type zinc-finger fold; the sequence is LKCPRCDSNNTKFCYYNNYSMSQPRYFCKACRRYWTHGGTLRNVPIGGGCRKNKH. Zn(2+)-binding residues include C62, C65, C87, and C90. Disordered regions lie at residues 124–144 and 306–328; these read TSSS…ASSS and WNKH…NKGQ.

In terms of assembly, interacts with the bZIP transcription factor Opaque-2/O2. Seed endosperm.

The protein localises to the nucleus. In terms of biological role, transcription factor that binds specifically to a 5'-AA[AG]G-3' consensus core sequence. May enhance the DNA binding of the bZIP transcription factor Opaque-2 to O2 binding site elements. This is Dof zinc finger protein PBF (PBF) from Zea mays (Maize).